The following is a 171-amino-acid chain: Transcription antitermination protein NusB (171 aa).

Belongs to the NusB family.

In terms of biological role, involved in transcription antitermination. Required for transcription of ribosomal RNA (rRNA) genes. Binds specifically to the boxA antiterminator sequence of the ribosomal RNA (rrn) operons. This Brucella ovis (strain ATCC 25840 / 63/290 / NCTC 10512) protein is Transcription antitermination protein NusB.